The chain runs to 104 residues: Small ribosomal subunit protein uS10 (104 aa).

The protein belongs to the universal ribosomal protein uS10 family. As to quaternary structure, part of the 30S ribosomal subunit.

Functionally, involved in the binding of tRNA to the ribosomes. The polypeptide is Small ribosomal subunit protein uS10 (Helicobacter pylori (strain P12)).